A 175-amino-acid chain; its full sequence is NADH-quinone oxidoreductase subunit B (175 aa).

[4Fe-4S] cluster contacts are provided by C54, C55, C119, and C149.

This sequence belongs to the complex I 20 kDa subunit family. As to quaternary structure, NDH-1 is composed of at least 14 different subunits, Nqo1 to Nqo14. The complex has a L-shaped structure, with the hydrophobic arm (subunits Nqo7, Nqo8, Nqo10 to Nqo14) embedded in the inner membrane and the hydrophilic peripheral arm (subunits Nqo1 to Nqo6, Nqo9) protruding into the bacterial cytoplasm. The hydrophilic domain contains all the redox centers. NADH-quinone oxidoreductase forms a supercomplex with ubiquinol-cytochrome c reductase complex (complex III or cytochrome b-c1 complex) and cytochrome c oxidase (complex IV), which stabilizes the NADH-quinone oxidoreductase complex. [4Fe-4S] cluster serves as cofactor.

The protein resides in the cell inner membrane. It carries out the reaction a quinone + NADH + 5 H(+)(in) = a quinol + NAD(+) + 4 H(+)(out). Functionally, NDH-1 shuttles electrons from NADH, via FMN and iron-sulfur (Fe-S) centers, to quinones in the respiratory chain. The immediate electron acceptor for the enzyme in this species is believed to be ubiquinone. Couples the redox reaction to proton translocation (for every two electrons transferred, four hydrogen ions are translocated across the cytoplasmic membrane), and thus conserves the redox energy in a proton gradient. The chain is NADH-quinone oxidoreductase subunit B from Paracoccus denitrificans (strain Pd 1222).